We begin with the raw amino-acid sequence, 100 residues long: MTPWFLYLIRTADNKLYTGITTDVERRYQQHQSGKGAKALRGKGELTLAFSAPVGDRSLALRAEYRVKQLTKRQKERLVAEGAGFAKLLSSLQTPEIKSD.

The GIY-YIG domain occupies 2-77; the sequence is TPWFLYLIRT…KQLTKRQKER (76 aa).

It belongs to the UPF0213 family.

The polypeptide is UPF0213 protein YhbQ (Escherichia coli O157:H7).